A 325-amino-acid polypeptide reads, in one-letter code: MEIFDYDNVLLLPRQCRVESRSECDPSVEFGPRRFKLPVVPANMKTVLDERIARWLAANDYFYVMHRFDLDALAFARSMREQGLCVSISSGVKPADYAVIDSLATSGVGADYITIDIAHGHAESVRRMIAHIKQRLPEAFVIAGNVGTPEALIDLENWGADATKVGIGPGKVCITRLKTGFGTGGWQLSALKWCARVATKPIIADGGIRHHGDIAKSVRFGAAMVMVGSLFAGHEESPGDTVEVDGRLYKEYYGSASDFNKGEYKHVEGKRILEPVKGRLADTLREMREDLQSSISYAGGRQLSDLRRVNYVILGGENAGEHLLM.

Cysteine 173 functions as the Thioimidate intermediate in the catalytic mechanism. NADP(+) is bound at residue 202 to 225 (IIADGGIRHHGDIAKSVRFGAAMV).

Belongs to the IMPDH/GMPR family. GuaC type 2 subfamily.

The catalysed reaction is IMP + NH4(+) + NADP(+) = GMP + NADPH + 2 H(+). In terms of biological role, catalyzes the irreversible NADPH-dependent deamination of GMP to IMP. It functions in the conversion of nucleobase, nucleoside and nucleotide derivatives of G to A nucleotides, and in maintaining the intracellular balance of A and G nucleotides. The chain is GMP reductase from Leptothrix cholodnii (strain ATCC 51168 / LMG 8142 / SP-6) (Leptothrix discophora (strain SP-6)).